The following is a 219-amino-acid chain: Large ribosomal subunit protein uL3 (219 aa).

The protein belongs to the universal ribosomal protein uL3 family. As to quaternary structure, part of the 50S ribosomal subunit. Forms a cluster with proteins L14 and L19.

Its function is as follows. One of the primary rRNA binding proteins, it binds directly near the 3'-end of the 23S rRNA, where it nucleates assembly of the 50S subunit. In Salinispora tropica (strain ATCC BAA-916 / DSM 44818 / JCM 13857 / NBRC 105044 / CNB-440), this protein is Large ribosomal subunit protein uL3.